Consider the following 103-residue polypeptide: UPF0145 protein RSKD131_1772 (103 aa).

This sequence belongs to the UPF0145 family.

In Cereibacter sphaeroides (strain KD131 / KCTC 12085) (Rhodobacter sphaeroides), this protein is UPF0145 protein RSKD131_1772.